A 675-amino-acid polypeptide reads, in one-letter code: Potassium-transporting ATPase ATP-binding subunit 2 (675 aa).

4 consecutive transmembrane segments (helical) span residues 34-54, 65-85, 216-236, and 245-265; these read IMFVVEVGMLLTLILICFPDI, LITIFIILLITILFANFSEAF, IALFTLLTTLTIIFLVVIVTL, and LILPIAMLIALTVCLIPTTIG. Asp-304 (4-aspartylphosphate intermediate) is an active-site residue. ATP is bound by residues Asp-341, Glu-345, 372-379, and Lys-390; that span reads FTAETRMS. Mg(2+)-binding residues include Asp-513 and Asp-517. 3 consecutive transmembrane segments (helical) span residues 569–591, 611–631, and 644–664; these read ALTTFSLANDVAKYFAILPALMM, AIISALIFNALIIVALIPIAM, and IFINNMLIYGLGGLIVPFLGI.

It belongs to the cation transport ATPase (P-type) (TC 3.A.3) family. Type IA subfamily. In terms of assembly, the system is composed of three essential subunits: KdpA, KdpB and KdpC.

The protein resides in the cell membrane. It catalyses the reaction K(+)(out) + ATP + H2O = K(+)(in) + ADP + phosphate + H(+). Part of the high-affinity ATP-driven potassium transport (or Kdp) system, which catalyzes the hydrolysis of ATP coupled with the electrogenic transport of potassium into the cytoplasm. This subunit is responsible for energy coupling to the transport system and for the release of the potassium ions to the cytoplasm. The sequence is that of Potassium-transporting ATPase ATP-binding subunit 2 from Staphylococcus aureus (strain MRSA252).